A 288-amino-acid polypeptide reads, in one-letter code: Acetyl-coenzyme A carboxylase carboxyl transferase subunit beta (288 aa).

The 255-residue stretch at 34 to 288 (LFAKCPACKH…HLVAFHGGGQ (255 aa)) folds into the CoA carboxyltransferase N-terminal domain. The Zn(2+) site is built by Cys-38, Cys-41, Cys-56, and Cys-59. The C4-type zinc-finger motif lies at 38-59 (CPACKHMIYKKDLGLAKICPTC).

It belongs to the AccD/PCCB family. In terms of assembly, acetyl-CoA carboxylase is a heterohexamer composed of biotin carboxyl carrier protein (AccB), biotin carboxylase (AccC) and two subunits each of ACCase subunit alpha (AccA) and ACCase subunit beta (AccD). It depends on Zn(2+) as a cofactor.

It is found in the cytoplasm. It carries out the reaction N(6)-carboxybiotinyl-L-lysyl-[protein] + acetyl-CoA = N(6)-biotinyl-L-lysyl-[protein] + malonyl-CoA. It functions in the pathway lipid metabolism; malonyl-CoA biosynthesis; malonyl-CoA from acetyl-CoA: step 1/1. Its function is as follows. Component of the acetyl coenzyme A carboxylase (ACC) complex. Biotin carboxylase (BC) catalyzes the carboxylation of biotin on its carrier protein (BCCP) and then the CO(2) group is transferred by the transcarboxylase to acetyl-CoA to form malonyl-CoA. The sequence is that of Acetyl-coenzyme A carboxylase carboxyl transferase subunit beta from Streptococcus pyogenes serotype M3 (strain ATCC BAA-595 / MGAS315).